Here is a 350-residue protein sequence, read N- to C-terminus: Biotin synthase (350 aa).

Residues 38 to 256 form the Radical SAM core domain; it reads NYVQVSTLLS…IAVARIMMPE (219 aa). Positions 53, 57, and 60 each coordinate [4Fe-4S] cluster. [2Fe-2S] cluster is bound by residues cysteine 97, cysteine 128, cysteine 188, and arginine 260.

Belongs to the radical SAM superfamily. Biotin synthase family. Homodimer. [4Fe-4S] cluster is required as a cofactor. It depends on [2Fe-2S] cluster as a cofactor.

The enzyme catalyses (4R,5S)-dethiobiotin + (sulfur carrier)-SH + 2 reduced [2Fe-2S]-[ferredoxin] + 2 S-adenosyl-L-methionine = (sulfur carrier)-H + biotin + 2 5'-deoxyadenosine + 2 L-methionine + 2 oxidized [2Fe-2S]-[ferredoxin]. It functions in the pathway cofactor biosynthesis; biotin biosynthesis; biotin from 7,8-diaminononanoate: step 2/2. Its function is as follows. Catalyzes the conversion of dethiobiotin (DTB) to biotin by the insertion of a sulfur atom into dethiobiotin via a radical-based mechanism. The sequence is that of Biotin synthase from Aliivibrio salmonicida (strain LFI1238) (Vibrio salmonicida (strain LFI1238)).